The sequence spans 487 residues: Cytochrome P450 716A75 (487 aa).

A helical membrane pass occupies residues 5-25; the sequence is FVSLLSLFLLILLPLSLLFLF. Cysteine 434 is a heme binding site.

Belongs to the cytochrome P450 family. The cofactor is heme.

Its subcellular location is the membrane. It catalyses the reaction beta-amyrin + reduced [NADPH--hemoprotein reductase] + O2 = erythrodiol + oxidized [NADPH--hemoprotein reductase] + H2O + H(+). It carries out the reaction erythrodiol + reduced [NADPH--hemoprotein reductase] + O2 = oleanolic aldehyde + oxidized [NADPH--hemoprotein reductase] + 2 H2O + H(+). The enzyme catalyses oleanolic aldehyde + reduced [NADPH--hemoprotein reductase] + O2 = oleanolate + oxidized [NADPH--hemoprotein reductase] + H2O + 2 H(+). Its function is as follows. Catalyzes the C-28 oxidation of beta-amyrin to form erythrodiol. Catalyzes the C-28 oxidation of erythrodiol to form oleanolic aldehyde. Catalyzes the C-28 oxidation of oleanolic aldehyde to form oleanolate. The polypeptide is Cytochrome P450 716A75 (Maesa lanceolata (False assegai)).